Reading from the N-terminus, the 127-residue chain is MKRIFYKHRKRRAPVFKEPEHGYQSLPELVLVPAQPLVCLGDYRTPDPGGLFPWSLRLMMPGAWTKLPGDGGSVPEKGKHGILGAQGQEHPGLNVSSPFSSPWTCYLSGHQPQNNNSPELQVKEILL.

The tract at residues 69 to 94 is disordered; the sequence is GDGGSVPEKGKHGILGAQGQEHPGLN.

This is an uncharacterized protein from Homo sapiens (Human).